A 420-amino-acid polypeptide reads, in one-letter code: Gamma-glutamyl phosphate reductase (420 aa).

Belongs to the gamma-glutamyl phosphate reductase family.

It is found in the cytoplasm. It carries out the reaction L-glutamate 5-semialdehyde + phosphate + NADP(+) = L-glutamyl 5-phosphate + NADPH + H(+). It participates in amino-acid biosynthesis; L-proline biosynthesis; L-glutamate 5-semialdehyde from L-glutamate: step 2/2. Functionally, catalyzes the NADPH-dependent reduction of L-glutamate 5-phosphate into L-glutamate 5-semialdehyde and phosphate. The product spontaneously undergoes cyclization to form 1-pyrroline-5-carboxylate. The chain is Gamma-glutamyl phosphate reductase from Neisseria meningitidis serogroup B (strain ATCC BAA-335 / MC58).